We begin with the raw amino-acid sequence, 176 residues long: Lipocalin-1 (176 aa).

The signal sequence occupies residues 1–19 (MMRALLLAIGLGLVAALQA). Cys80 and Cys171 are oxidised to a cystine.

The protein belongs to the calycin superfamily. Lipocalin family. As to quaternary structure, predominantly monomer. May form homodimer. Interacts with LMBR1L; this interaction mediates the endocytosis of LCN1.

Its subcellular location is the secreted. In terms of biological role, could play a role in taste reception. Could be necessary for the concentration and delivery of sapid molecules in the gustatory system. Can bind various ligands, with chemical structures ranging from lipids and retinoids to the macrocyclic antibiotic rifampicin and even to microbial siderophores. Exhibits an extremely wide ligand pocket. The protein is Lipocalin-1 (LCN1) of Sus scrofa (Pig).